A 193-amino-acid polypeptide reads, in one-letter code: T-cell receptor-associated transmembrane adapter 1 (193 aa).

Over 1–10 the chain is Extracellular; the sequence is MSGNAECHFS. Residues 11–31 form a helical; Signal-anchor for type III membrane protein membrane-spanning segment; it reads IWAILAFLGLALTISLIFNIF. Residues 32 to 193 lie on the Cytoplasmic side of the membrane; the sequence is HCVEKQRQEK…LHSLDYDLAQ (162 aa). S46 is subject to Phosphoserine. Y80 is subject to Phosphotyrosine. Positions 80–83 are interaction with PIK3R1; it reads YEQM. Positions 116 to 166 are disordered; sequence NEGKRRKPRKQKSHLSDKDEEGQMHAKDISLSKTTLVDSYPPESEAIEENI. The segment covering 119–128 has biased composition (basic residues); it reads KRRKPRKQKS. A compositionally biased stretch (basic and acidic residues) spans 129–145; the sequence is HLSDKDEEGQMHAKDIS.

As to quaternary structure, homodimer; disulfide-linked. Interacts with CD3Z. When phosphorylated, interacts with PIK3R1. In terms of processing, phosphorylated on tyrosines upon TCR activation.

The protein localises to the cell membrane. Stabilizes the TCR (T-cell antigen receptor)/CD3 complex at the surface of T-cells. The protein is T-cell receptor-associated transmembrane adapter 1 (TRAT1) of Bos taurus (Bovine).